The chain runs to 600 residues: MPEHILVAVAWPYANGPRHIGHVAGFGVPADIFARYHRLRGNRVLMVSGTDEHGTPITLVADKEGTTPQAIADRYNKIIGDDLYNLGLSYDTFTRTTTANHYAVTQDIFRTLYERGYIIRQETLGAFSATTGRTLPDRYIEGTCPLCGYDEARGDQCDNCGSQLDPTDLINPRSKVDGQPPVFKPTEHFFLDLPAFAEQLHDWINRQDHWRPNVRNFSLNFLKDLKPRAITRDLEWGVPIPLPEYANRDDKKIYVWFDAVIGYLSASIEWAQNSGQPDAWREWWQNPDARHFYFMGKDNIVFHTVIWPAMLLGYGAGGQFGADPGGKYDGIPLQLPYNVVSSEFLTMEGKKFSSSRGIVIYVNDFLSRYDADALRYFLTIAGPENQDTDFTWAEFVRRNNDELVATWGNLVNRTLSNVYKNFGSVPQPGPLTPVDEQVLAEVTGGIETVGELLAAARFKAALAEAMRLAAQVNIYLSEQEPWKVIKSDHERAATIWYVALRCVDTLKIIFTPFLPFSSQRLHEYLGYNGYIAGPLTFREVTEANGRTHRVLTGDYDRWVGRWEPSVLPVGQVLRQPQPLFKKLDEKVIEEELARMQSRLG.

A 'HIGH' region motif is present at residues 12-22; sequence PYANGPRHIGH. Zn(2+) is bound by residues Cys-144, Cys-147, Cys-157, and Cys-160. The short motif at 351-355 is the 'KMSKS' region element; sequence KFSSS. Ser-354 contacts ATP.

Belongs to the class-I aminoacyl-tRNA synthetase family. MetG type 1 subfamily. As to quaternary structure, monomer. Zn(2+) is required as a cofactor.

It localises to the cytoplasm. It carries out the reaction tRNA(Met) + L-methionine + ATP = L-methionyl-tRNA(Met) + AMP + diphosphate. Is required not only for elongation of protein synthesis but also for the initiation of all mRNA translation through initiator tRNA(fMet) aminoacylation. The sequence is that of Methionine--tRNA ligase from Chloroflexus aggregans (strain MD-66 / DSM 9485).